Here is a 307-residue protein sequence, read N- to C-terminus: MSGFVDKPVPVEVPGLTHLHTGKVRDLYATESGELVMVASDRVSAFDWVLPTEIPDKGRLLTQLSLWWFDQLSDIIDNHVISDTPPPGAPDDWAGRTLVCRRLDMVPVECVARGYLTGSGLAEYTATGAVCGVRLPEGLVDGSRLDPPIFTPATKAEVGEHDENVSLETVAERHGPALAERLREVTLALYERGREIAEERGILLADTKFEFGWDSDGSLVLADEVLTPDSSRFWPKEEWRPGRPQPSFDKQIIRDWLSSAESGWDRTSETPPPPLPDTVVEHTRARYIEVFERLTGQTADFVGISRS.

Belongs to the SAICAR synthetase family.

The enzyme catalyses 5-amino-1-(5-phospho-D-ribosyl)imidazole-4-carboxylate + L-aspartate + ATP = (2S)-2-[5-amino-1-(5-phospho-beta-D-ribosyl)imidazole-4-carboxamido]succinate + ADP + phosphate + 2 H(+). Its pathway is purine metabolism; IMP biosynthesis via de novo pathway; 5-amino-1-(5-phospho-D-ribosyl)imidazole-4-carboxamide from 5-amino-1-(5-phospho-D-ribosyl)imidazole-4-carboxylate: step 1/2. This is Phosphoribosylaminoimidazole-succinocarboxamide synthase from Thermobifida fusca (strain YX).